A 288-amino-acid chain; its full sequence is Polyamine aminopropyltransferase (288 aa).

Residues 9 to 238 (ETLHDQFGQY…GIMTFAWATD (230 aa)) form the PABS domain. Q33 contributes to the S-methyl-5'-thioadenosine binding site. Spermidine is bound by residues H64 and D88. Residues E108 and 140–141 (DG) each bind S-methyl-5'-thioadenosine. D158 acts as the Proton acceptor in catalysis. 158–161 (DCTD) lines the spermidine pocket. S-methyl-5'-thioadenosine is bound at residue P165.

Belongs to the spermidine/spermine synthase family. In terms of assembly, homodimer or homotetramer.

It localises to the cytoplasm. It catalyses the reaction S-adenosyl 3-(methylsulfanyl)propylamine + putrescine = S-methyl-5'-thioadenosine + spermidine + H(+). It participates in amine and polyamine biosynthesis; spermidine biosynthesis; spermidine from putrescine: step 1/1. Catalyzes the irreversible transfer of a propylamine group from the amino donor S-adenosylmethioninamine (decarboxy-AdoMet) to putrescine (1,4-diaminobutane) to yield spermidine. The protein is Polyamine aminopropyltransferase of Shigella boydii serotype 4 (strain Sb227).